A 205-amino-acid polypeptide reads, in one-letter code: Variable small protein 11 (205 aa).

Residues 1-18 form the signal peptide; sequence MRKRISAIIMTLFMVFMS. Residue C19 is the site of N-palmitoyl cysteine attachment. C19 carries the S-diacylglycerol cysteine lipid modification.

The protein belongs to the variable small protein (Vsp) family.

It is found in the cell outer membrane. Its function is as follows. The Vlp and Vsp proteins are antigenically distinct proteins, only one vlp or vsp gene is transcriptionally active at any one time. Switching between these genes is a mechanism of host immune response evasion. This Borrelia hermsii protein is Variable small protein 11.